A 186-amino-acid polypeptide reads, in one-letter code: Ribosome-recycling factor (186 aa).

This sequence belongs to the RRF family.

It is found in the cytoplasm. In terms of biological role, responsible for the release of ribosomes from messenger RNA at the termination of protein biosynthesis. May increase the efficiency of translation by recycling ribosomes from one round of translation to another. The chain is Ribosome-recycling factor from Rubrobacter xylanophilus (strain DSM 9941 / JCM 11954 / NBRC 16129 / PRD-1).